Reading from the N-terminus, the 289-residue chain is ATP synthase subunit a (289 aa).

The next 6 helical transmembrane spans lie at 43–63, 104–124, 160–180, 193–213, 232–252, and 259–279; these read AFHV…LFIF, IAPL…IDLV, ISVF…GGFL, IVVQ…TLIA, IFIL…ALGV, and AVFH…LTIV.

Belongs to the ATPase A chain family. In terms of assembly, F-type ATPases have 2 components, CF(1) - the catalytic core - and CF(0) - the membrane proton channel. CF(1) has five subunits: alpha(3), beta(3), gamma(1), delta(1), epsilon(1). CF(0) has three main subunits: a(1), b(2) and c(9-12). The alpha and beta chains form an alternating ring which encloses part of the gamma chain. CF(1) is attached to CF(0) by a central stalk formed by the gamma and epsilon chains, while a peripheral stalk is formed by the delta and b chains.

Its subcellular location is the cell inner membrane. Its function is as follows. Key component of the proton channel; it plays a direct role in the translocation of protons across the membrane. In Pseudomonas paraeruginosa (strain DSM 24068 / PA7) (Pseudomonas aeruginosa (strain PA7)), this protein is ATP synthase subunit a.